The primary structure comprises 150 residues: Ribonuclease H (150 aa).

An RNase H type-1 domain is found at 2 to 143 (PAPILDIFVD…ADELANRAIE (142 aa)). Mg(2+) contacts are provided by aspartate 11, glutamate 49, aspartate 71, and aspartate 135.

This sequence belongs to the RNase H family. Monomer. The cofactor is Mg(2+).

The protein resides in the cytoplasm. The enzyme catalyses Endonucleolytic cleavage to 5'-phosphomonoester.. Its function is as follows. Endonuclease that specifically degrades the RNA of RNA-DNA hybrids. In Dichelobacter nodosus (strain VCS1703A), this protein is Ribonuclease H.